The following is a 102-amino-acid chain: Large ribosomal subunit protein bL21 (102 aa).

This sequence belongs to the bacterial ribosomal protein bL21 family. As to quaternary structure, part of the 50S ribosomal subunit. Contacts protein L20.

In terms of biological role, this protein binds to 23S rRNA in the presence of protein L20. The sequence is that of Large ribosomal subunit protein bL21 from Bifidobacterium longum subsp. infantis (strain ATCC 15697 / DSM 20088 / JCM 1222 / NCTC 11817 / S12).